The sequence spans 446 residues: Xylose isomerase 1 (446 aa).

Catalysis depends on residues H109 and D112. The Mg(2+) site is built by E240, E276, H279, D304, D315, D317, and D347.

It belongs to the xylose isomerase family. In terms of assembly, homotetramer. Requires Mg(2+) as cofactor.

The protein localises to the cytoplasm. The enzyme catalyses alpha-D-xylose = alpha-D-xylulofuranose. The polypeptide is Xylose isomerase 1 (Xanthomonas campestris pv. campestris (strain 8004)).